We begin with the raw amino-acid sequence, 456 residues long: Argininosuccinate lyase (456 aa).

Belongs to the lyase 1 family. Argininosuccinate lyase subfamily.

The protein localises to the cytoplasm. It carries out the reaction 2-(N(omega)-L-arginino)succinate = fumarate + L-arginine. The protein operates within amino-acid biosynthesis; L-arginine biosynthesis; L-arginine from L-ornithine and carbamoyl phosphate: step 3/3. The sequence is that of Argininosuccinate lyase from Listeria innocua serovar 6a (strain ATCC BAA-680 / CLIP 11262).